An 879-amino-acid chain; its full sequence is Phosphoenolpyruvate carboxylase (879 aa).

Residues His-138 and Lys-545 contribute to the active site.

This sequence belongs to the PEPCase type 1 family. Mg(2+) serves as cofactor.

The enzyme catalyses oxaloacetate + phosphate = phosphoenolpyruvate + hydrogencarbonate. Forms oxaloacetate, a four-carbon dicarboxylic acid source for the tricarboxylic acid cycle. This Actinobacillus pleuropneumoniae serotype 5b (strain L20) protein is Phosphoenolpyruvate carboxylase.